Consider the following 715-residue polypeptide: Fatty acid oxidation complex subunit alpha (715 aa).

Positions 1–194 (MHEQRAKPSA…RLGLVDDAVP (194 aa)) are enoyl-CoA hydratase. Residues 310-715 (HALHRIGILG…QGERFYPQGS (406 aa)) form a 3-hydroxyacyl-CoA dehydrogenase region.

This sequence in the N-terminal section; belongs to the enoyl-CoA hydratase/isomerase family. In the central section; belongs to the 3-hydroxyacyl-CoA dehydrogenase family. Heterotetramer of two alpha chains (FadJ) and two beta chains (FadI).

Its subcellular location is the cytoplasm. It carries out the reaction a (3S)-3-hydroxyacyl-CoA = a (2E)-enoyl-CoA + H2O. It catalyses the reaction a 4-saturated-(3S)-3-hydroxyacyl-CoA = a (3E)-enoyl-CoA + H2O. The catalysed reaction is a (3S)-3-hydroxyacyl-CoA + NAD(+) = a 3-oxoacyl-CoA + NADH + H(+). The enzyme catalyses (3S)-3-hydroxybutanoyl-CoA = (3R)-3-hydroxybutanoyl-CoA. The protein operates within lipid metabolism; fatty acid beta-oxidation. In terms of biological role, catalyzes the formation of a hydroxyacyl-CoA by addition of water on enoyl-CoA. Also exhibits 3-hydroxyacyl-CoA epimerase and 3-hydroxyacyl-CoA dehydrogenase activities. In Serratia proteamaculans (strain 568), this protein is Fatty acid oxidation complex subunit alpha.